Reading from the N-terminus, the 253-residue chain is Ribonuclease HII (253 aa).

In terms of domain architecture, RNase H type-2 spans 32–223 (APVAGLDEAG…FKTSGEEDRI (192 aa)). A divalent metal cation is bound by residues D38, E39, and D130.

Belongs to the RNase HII family. Mn(2+) serves as cofactor. The cofactor is Mg(2+).

The protein resides in the cytoplasm. The catalysed reaction is Endonucleolytic cleavage to 5'-phosphomonoester.. In terms of biological role, endonuclease that specifically degrades the RNA of RNA-DNA hybrids. In Chelativorans sp. (strain BNC1), this protein is Ribonuclease HII.